The following is a 599-amino-acid chain: Crinkler effector protein 8 (599 aa).

Positions 1–17 (MVTLFCAVVGVAGSTFP) are cleaved as a signal peptide. Residues 18–52 (VDINENKSVGHLKKAIKEEKMYQFPADELQLFLAK) are LQLFLAK domain. Asparagine 23 is a glycosylation site (N-linked (GlcNAc...) asparagine). Positions 53–109 (AGGNAWLSSLTEDVKKLKKGEKTALVKSLTQEEKELQGEDPISECLEGMDPPKVKQI) are DWL domain. Residues 110–116 (HVLVALP) carry the HVLVXXP motif motif. Positions 117–590 (PGTSSAPISD…EAAEQESQGK (474 aa)) are C-terminal D2 effector domain. A phosphoserine mark is found at serine 249, serine 281, and serine 385. The 302-residue stretch at 289-590 (LSKKLVWSYG…EAAEQESQGK (302 aa)) folds into the Protein kinase domain. The Proton acceptor role is filled by aspartate 470. Residues serine 474 and serine 587 each carry the phosphoserine modification. The segment at 577 to 599 (RFEREAAEQESQGKGVRKKHRRA) is disordered. The short motif at 590–599 (KGVRKKHRRA) is the Host nuclear localization signal element.

The protein in the N-terminal section; belongs to the Crinkler effector family. In the C-terminal section; belongs to the protein kinase superfamily. In terms of assembly, dimerizes in host plants. Post-translationally, autophosphorylated at Ser-249, Ser-281, Ser-385, Ser-474 and Ser-587. Additional serines or threonines are also targeted for phosphorylation.

The protein resides in the secreted. It is found in the host nucleus. The enzyme catalyses L-seryl-[protein] + ATP = O-phospho-L-seryl-[protein] + ADP + H(+). It catalyses the reaction L-threonyl-[protein] + ATP = O-phospho-L-threonyl-[protein] + ADP + H(+). Its function is as follows. Secreted effector that induces cell death when expressed in host plants. Acts as a kinase and is able to autophosphorylate, however its cell death inducing ability is not a direct result of its kinase activity, but rather a consequence of the phosphorylated state of the five identified serine residues in the CRN8 protein. This is Crinkler effector protein 8 from Phytophthora infestans (Potato late blight agent).